The primary structure comprises 152 residues: Ribosome maturation factor RimP (152 aa).

Belongs to the RimP family.

The protein resides in the cytoplasm. Functionally, required for maturation of 30S ribosomal subunits. The chain is Ribosome maturation factor RimP from Ruminiclostridium cellulolyticum (strain ATCC 35319 / DSM 5812 / JCM 6584 / H10) (Clostridium cellulolyticum).